Consider the following 383-residue polypeptide: E3 ubiquitin-protein ligase SPL2 (383 aa).

Residues 1-14 (MSSPERALLNLLTD) are Cytoplasmic-facing. A helical membrane pass occupies residues 15–35 (IALSFDGAILGLTLAVSAVGS). The Chloroplast intermembrane segment spans residues 36–269 (ALKYASTNAA…MIEDLMEQTN (234 aa)). Residues 270 to 290 (FIFLGSVILGIVSVGILSYAA) form a helical membrane-spanning segment. Topologically, residues 291 to 383 (VRTWNKWKQW…IRGSMRVYYS (93 aa)) are cytoplasmic. The RING-type zinc finger occupies 331 to 370 (CVICVSRRRVPAFIPCGHVVCCRRCASTVERELNPKCPVC).

It is found in the plastid. The protein localises to the chloroplast outer membrane. It carries out the reaction S-ubiquitinyl-[E2 ubiquitin-conjugating enzyme]-L-cysteine + [acceptor protein]-L-lysine = [E2 ubiquitin-conjugating enzyme]-L-cysteine + N(6)-ubiquitinyl-[acceptor protein]-L-lysine.. Its pathway is protein modification; protein ubiquitination. Functionally, possesses E3 ubiquitin-protein ligase activity. The sequence is that of E3 ubiquitin-protein ligase SPL2 from Arabidopsis thaliana (Mouse-ear cress).